Here is a 494-residue protein sequence, read N- to C-terminus: 3-octaprenyl-4-hydroxybenzoate carboxy-lyase (494 aa).

Asn172 contributes to the Mn(2+) binding site. Prenylated FMN-binding positions include 175 to 177, 189 to 191, and 194 to 195; these read IYR, RWL, and RG. Residue Glu238 participates in Mn(2+) binding. Asp287 (proton donor) is an active-site residue.

This sequence belongs to the UbiD family. As to quaternary structure, homohexamer. Requires prenylated FMN as cofactor. It depends on Mn(2+) as a cofactor.

Its subcellular location is the cell membrane. It catalyses the reaction a 4-hydroxy-3-(all-trans-polyprenyl)benzoate + H(+) = a 2-(all-trans-polyprenyl)phenol + CO2. Its pathway is cofactor biosynthesis; ubiquinone biosynthesis. Catalyzes the decarboxylation of 3-octaprenyl-4-hydroxy benzoate to 2-octaprenylphenol, an intermediate step in ubiquinone biosynthesis. The sequence is that of 3-octaprenyl-4-hydroxybenzoate carboxy-lyase from Shigella flexneri serotype 5b (strain 8401).